Here is a 317-residue protein sequence, read N- to C-terminus: Melanocyte-stimulating hormone receptor (317 aa).

Residues 1–37 (MPVQGSQRRLLGSLNSTPTATPKLGLAANQTGAWCLE) are Extracellular-facing. An N-linked (GlcNAc...) asparagine glycan is attached at N29. A helical membrane pass occupies residues 38-63 (VSIPDGLFLSLGLVSLVENVLVVAAI). Residues 64–72 (AKNRNLHSP) lie on the Cytoplasmic side of the membrane. The chain crosses the membrane as a helical span at residues 73-93 (MYCFICCLALSDLLVSGSNML). Topologically, residues 94–118 (ETAVILLLEAGALAARAAVVQQLDN) are extracellular. The helical transmembrane segment at 119-140 (VIDVITCSSMLSSLCFLGAIAV) threads the bilayer. At 141 to 163 (DRYISIFYALRYHSIVTLPRAQR) the chain is on the cytoplasmic side. The helical transmembrane segment at 164-183 (VVAAIWVASVLFSTLFIAYY) threads the bilayer. Residues 184 to 191 (DHAAVLLC) lie on the Extracellular side of the membrane. A helical membrane pass occupies residues 192-211 (LVVFFLAMLVLMAVLYVHML). The Cytoplasmic portion of the chain corresponds to 212–240 (ARACQHAQGIAQLHKRQRPAHQGFGLKGA). Residues 241–266 (ATLTILLGIFFLCWGPFFLHLTLIVL) form a helical membrane-spanning segment. Topologically, residues 267–279 (CPQHPTCSCIFKN) are extracellular. The chain crosses the membrane as a helical span at residues 280–300 (FNLFLALIICNAIIDPLIYAF). Over 301–317 (RSQELRRTLKEVLLCSW) the chain is Cytoplasmic. Residue C315 is the site of S-palmitoyl cysteine attachment.

This sequence belongs to the G-protein coupled receptor 1 family. Interacts with MGRN1, but does not undergo MGRN1-mediated ubiquitination; this interaction competes with GNAS-binding and thus inhibits agonist-induced cAMP production. Interacts with OPN3; the interaction results in a decrease in MC1R-mediated cAMP signaling and ultimately a decrease in melanin production in melanocytes.

It is found in the cell membrane. Functionally, receptor for MSH (alpha, beta and gamma) and ACTH. The activity of this receptor is mediated by G proteins which activate adenylate cyclase. Mediates melanogenesis, the production of eumelanin (black/brown) and phaeomelanin (red/yellow), via regulation of cAMP signaling in melanocytes. In Colobus guereza (Mantled guereza), this protein is Melanocyte-stimulating hormone receptor (MC1R).